The primary structure comprises 345 residues: Dimethyladenosine transferase 1, mitochondrial (345 aa).

The transit peptide at 1–27 (MAASGKLGTFRLPPLPTIREIIKLFGL) directs the protein to the mitochondrion. S-adenosyl-L-methionine is bound by residues 35–38 (QNFL), asparagine 36, leucine 38, glycine 63, glutamate 85, aspartate 111, and asparagine 141.

Belongs to the class I-like SAM-binding methyltransferase superfamily. rRNA adenine N(6)-methyltransferase family. KsgA subfamily. Interacts with mitochondrial RNA polymerase POLRMT. Interacts with TFAM.

The protein localises to the mitochondrion. Functionally, S-adenosyl-L-methionine-dependent methyltransferase which specifically dimethylates mitochondrial 12S rRNA at the conserved stem loop. Also required for basal transcription of mitochondrial DNA, probably via its interaction with POLRMT and TFAM. Stimulates transcription independently of the methyltransferase activity. The protein is Dimethyladenosine transferase 1, mitochondrial (Tfb1m) of Rattus norvegicus (Rat).